The chain runs to 316 residues: Probable 5-dehydro-4-deoxyglucarate dehydratase 1 (316 aa).

Belongs to the DapA family.

It catalyses the reaction 5-dehydro-4-deoxy-D-glucarate + H(+) = 2,5-dioxopentanoate + CO2 + H2O. Its pathway is carbohydrate acid metabolism; D-glucarate degradation; 2,5-dioxopentanoate from D-glucarate: step 2/2. This chain is Probable 5-dehydro-4-deoxyglucarate dehydratase 1, found in Streptomyces coelicolor (strain ATCC BAA-471 / A3(2) / M145).